Consider the following 103-residue polypeptide: Large ribosomal subunit protein uL24 (103 aa).

This sequence belongs to the universal ribosomal protein uL24 family. In terms of assembly, part of the 50S ribosomal subunit.

One of two assembly initiator proteins, it binds directly to the 5'-end of the 23S rRNA, where it nucleates assembly of the 50S subunit. In terms of biological role, one of the proteins that surrounds the polypeptide exit tunnel on the outside of the subunit. The polypeptide is Large ribosomal subunit protein uL24 (Dehalococcoides mccartyi (strain ATCC BAA-2266 / KCTC 15142 / 195) (Dehalococcoides ethenogenes (strain 195))).